The sequence spans 126 residues: Histone H2B type 1-B (126 aa).

Residues 1–12 (MPEPSKSAPAPK) are compositionally biased toward low complexity. The segment at 1–36 (MPEPSKSAPAPKKGSKKAISKAQKKDGKKRKRSRKE) is disordered. Pro2 carries the post-translational modification N-acetylproline. ADP-ribosyl glutamic acid is present on Glu3. An N6-(2-hydroxyisobutyryl)lysine; alternate modification is found at Lys6. Lys6 is modified (N6-(beta-hydroxybutyryl)lysine; alternate). Lys6 carries the N6-acetyllysine; alternate modification. Lys6 is subject to N6-butyryllysine; alternate. Lys6 is subject to N6-crotonyllysine; alternate. N6-lactoyllysine; alternate is present on Lys6. Lys6 participates in a covalent cross-link: Glycyl lysine isopeptide (Lys-Gly) (interchain with G-Cter in SUMO2); alternate. Position 7 is an ADP-ribosylserine (Ser7). Lys12 carries the post-translational modification N6-(beta-hydroxybutyryl)lysine; alternate. Lys12 and Lys13 each carry N6-acetyllysine; alternate. N6-crotonyllysine; alternate occurs at positions 12 and 13. Lys12 is subject to N6-lactoyllysine; alternate. Lys13 bears the N6-(2-hydroxyisobutyryl)lysine; alternate mark. The residue at position 15 (Ser15) is a Phosphoserine; by STK4/MST1. 4 positions are modified to N6-acetyllysine; alternate: Lys16, Lys17, Lys21, and Lys24. 4 positions are modified to N6-crotonyllysine; alternate: Lys16, Lys17, Lys21, and Lys24. N6-lactoyllysine; alternate is present on residues Lys16, Lys17, Lys21, and Lys24. N6-glutaryllysine; alternate is present on Lys17. N6-(2-hydroxyisobutyryl)lysine; alternate is present on residues Lys21 and Lys24. Lys21 is subject to N6-(beta-hydroxybutyryl)lysine; alternate. Lys21 is modified (N6-butyryllysine; alternate). Lys21 participates in a covalent cross-link: Glycyl lysine isopeptide (Lys-Gly) (interchain with G-Cter in SUMO2); alternate. The residue at position 25 (Lys25) is an N6-(2-hydroxyisobutyryl)lysine. An N6-(2-hydroxyisobutyryl)lysine; alternate modification is found at Lys35. Lys35 bears the N6-(beta-hydroxybutyryl)lysine; alternate mark. At Lys35 the chain carries N6-crotonyllysine; alternate. Position 35 is an N6-glutaryllysine; alternate (Lys35). Lys35 carries the N6-succinyllysine; alternate modification. Lys35 is covalently cross-linked (Glycyl lysine isopeptide (Lys-Gly) (interchain with G-Cter in ubiquitin); alternate). Glu36 bears the PolyADP-ribosyl glutamic acid mark. A Phosphoserine; by AMPK modification is found at Ser37. Lys44, Lys47, and Lys58 each carry N6-(2-hydroxyisobutyryl)lysine; alternate. Lys44 bears the N6-lactoyllysine; alternate mark. An N6-glutaryllysine; alternate mark is found at Lys44 and Lys47. At Lys47 the chain carries N6-methyllysine; alternate. Position 58 is an N6,N6-dimethyllysine; alternate (Lys58). Position 80 is a dimethylated arginine (Arg80). At Lys86 the chain carries N6-(2-hydroxyisobutyryl)lysine; alternate. Residue Lys86 is modified to N6-acetyllysine; alternate. Position 86 is an N6-lactoyllysine; alternate (Lys86). The residue at position 86 (Lys86) is an N6,N6,N6-trimethyllysine; alternate. 2 positions are modified to omega-N-methylarginine: Arg87 and Arg93. Lys109 carries the N6-(2-hydroxyisobutyryl)lysine; alternate modification. Lys109 carries the N6-(beta-hydroxybutyryl)lysine; alternate modification. Lys109 carries the post-translational modification N6-lactoyllysine; alternate. Position 109 is an N6-glutaryllysine; alternate (Lys109). Lys109 bears the N6-methyllysine; alternate mark. The O-linked (GlcNAc) serine glycan is linked to Ser113. Phosphothreonine is present on Thr116. 2 positions are modified to N6-(2-hydroxyisobutyryl)lysine; alternate: Lys117 and Lys121. N6-(beta-hydroxybutyryl)lysine; alternate is present on Lys117. N6-lactoyllysine; alternate is present on residues Lys117 and Lys121. Residues Lys117 and Lys121 each carry the N6-glutaryllysine; alternate modification. N6-succinyllysine; alternate occurs at positions 117 and 121. At Lys117 the chain carries N6-methylated lysine; alternate. Lys121 is covalently cross-linked (Glycyl lysine isopeptide (Lys-Gly) (interchain with G-Cter in ubiquitin); alternate).

The protein belongs to the histone H2B family. In terms of assembly, the nucleosome is a histone octamer containing two molecules each of H2A, H2B, H3 and H4 assembled in one H3-H4 heterotetramer and two H2A-H2B heterodimers. The octamer wraps approximately 147 bp of DNA. Post-translationally, monoubiquitination at Lys-35 (H2BK34Ub) by the MSL1/MSL2 dimer is required for histone H3 'Lys-4' (H3K4me) and 'Lys-79' (H3K79me) methylation and transcription activation at specific gene loci, such as HOXA9 and MEIS1 loci. Similarly, monoubiquitination at Lys-121 (H2BK120Ub) by the RNF20/40 complex gives a specific tag for epigenetic transcriptional activation and is also prerequisite for histone H3 'Lys-4' and 'Lys-79' methylation. It also functions cooperatively with the FACT dimer to stimulate elongation by RNA polymerase II. H2BK120Ub also acts as a regulator of mRNA splicing: deubiquitination by USP49 is required for efficient cotranscriptional splicing of a large set of exons. Phosphorylated on Ser-15 (H2BS14ph) by STK4/MST1 during apoptosis; which facilitates apoptotic chromatin condensation. Also phosphorylated on Ser-15 in response to DNA double strand breaks (DSBs), and in correlation with somatic hypermutation and immunoglobulin class-switch recombination. Phosphorylation at Ser-37 (H2BS36ph) by AMPK in response to stress promotes transcription. In terms of processing, glcNAcylation at Ser-113 promotes monoubiquitination of Lys-121. It fluctuates in response to extracellular glucose, and associates with transcribed genes. Post-translationally, ADP-ribosylated by PARP1 or PARP2 on Ser-7 (H2BS6ADPr) in response to DNA damage. H2BS6ADPr promotes recruitment of CHD1L. Mono-ADP-ribosylated on Glu-3 (H2BE2ADPr) by PARP3 in response to single-strand breaks. Poly ADP-ribosylation on Glu-36 (H2BE35ADPr) by PARP1 regulates adipogenesis: it inhibits phosphorylation at Ser-37 (H2BS36ph), thereby blocking expression of pro-adipogenetic genes. Hydroxybutyrylation of histones is induced by starvation. In terms of processing, crotonylation (Kcr) is specifically present in male germ cells and marks testis-specific genes in post-meiotic cells, including X-linked genes that escape sex chromosome inactivation in haploid cells. Crotonylation marks active promoters and enhancers and confers resistance to transcriptional repressors. It is also associated with post-meiotically activated genes on autosomes. Post-translationally, lactylated in macrophages by EP300/P300 by using lactoyl-CoA directly derived from endogenous or exogenous lactate, leading to stimulates gene transcription.

It localises to the nucleus. Its subcellular location is the chromosome. Its function is as follows. Core component of nucleosome. Nucleosomes wrap and compact DNA into chromatin, limiting DNA accessibility to the cellular machineries which require DNA as a template. Histones thereby play a central role in transcription regulation, DNA repair, DNA replication and chromosomal stability. DNA accessibility is regulated via a complex set of post-translational modifications of histones, also called histone code, and nucleosome remodeling. The chain is Histone H2B type 1-B from Mus musculus (Mouse).